Reading from the N-terminus, the 223-residue chain is Protein Wnt-1 (223 aa).

Intrachain disulfides connect Cys-7-Cys-24, Cys-72-Cys-86, and Cys-74-Cys-81. Ser-78 carries O-palmitoleoyl serine; by PORCN lipidation. The segment at 110-135 is disordered; that stretch reads VTMRNDGSPSDRETESSFVPYNPSHK. Over residues 125 to 135 the composition is skewed to polar residues; the sequence is SSFVPYNPSHK. 6 cysteine pairs are disulfide-bonded: Cys-152-Cys-183, Cys-168-Cys-178, Cys-182-Cys-222, Cys-198-Cys-213, Cys-200-Cys-210, and Cys-205-Cys-206. An N-linked (GlcNAc...) asparagine glycan is attached at Asn-169.

The protein belongs to the Wnt family. Post-translationally, palmitoleoylation is required for efficient binding to frizzled receptors. Palmitoleoylation is necessary for proper trafficking to cell surface. Depalmitoleoylated by NOTUM, leading to inhibit Wnt signaling pathway.

Its subcellular location is the secreted. The protein localises to the extracellular space. It is found in the extracellular matrix. Its function is as follows. Ligand for members of the frizzled family of seven transmembrane receptors. Probable developmental protein. The chain is Protein Wnt-1 (WNT-1) from Strongylocentrotus purpuratus (Purple sea urchin).